We begin with the raw amino-acid sequence, 237 residues long: N-(5'-phosphoribosyl)anthranilate isomerase (237 aa).

It belongs to the TrpF family.

It catalyses the reaction N-(5-phospho-beta-D-ribosyl)anthranilate = 1-(2-carboxyphenylamino)-1-deoxy-D-ribulose 5-phosphate. Its pathway is amino-acid biosynthesis; L-tryptophan biosynthesis; L-tryptophan from chorismate: step 3/5. The protein is N-(5'-phosphoribosyl)anthranilate isomerase of Desulfitobacterium hafniense (strain DSM 10664 / DCB-2).